Reading from the N-terminus, the 32-residue chain is Photosystem II reaction center protein Z (32 aa).

The helical transmembrane segment at 12–32 (IGSAAWAGLVLLVGTLNYLVI) threads the bilayer.

It belongs to the PsbZ family. PSII is composed of 1 copy each of membrane proteins PsbA, PsbB, PsbC, PsbD, PsbE, PsbF, PsbH, PsbI, PsbJ, PsbK, PsbL, PsbM, PsbT, PsbY, PsbZ, Psb30/Ycf12, at least 3 peripheral proteins of the oxygen-evolving complex and a large number of cofactors. It forms dimeric complexes.

It localises to the plastid. The protein localises to the chloroplast thylakoid membrane. May control the interaction of photosystem II (PSII) cores with the light-harvesting antenna, regulates electron flow through the 2 photosystem reaction centers. PSII is a light-driven water plastoquinone oxidoreductase, using light energy to abstract electrons from H(2)O, generating a proton gradient subsequently used for ATP formation. This chain is Photosystem II reaction center protein Z, found in Euglena anabaena (Euglenaria anabaena).